The following is a 125-amino-acid chain: Histone H1-like protein Hc1 (125 aa).

The disordered stretch occupies residues 98–125 (TKAKVKPTKKAAPKTKVKTAKKTRSTKK). A compositionally biased stretch (basic residues) spans 100 to 125 (AKVKPTKKAAPKTKVKTAKKTRSTKK).

It belongs to the histone H1/H5 family. HCT subfamily.

In terms of biological role, might have a role analogous to that of eukaryotic histone proteins. This Chlamydia trachomatis serovar D (strain ATCC VR-885 / DSM 19411 / UW-3/Cx) protein is Histone H1-like protein Hc1 (hctA).